The sequence spans 203 residues: Anti-sigma-W factor RsiW (203 aa).

The Cytoplasmic portion of the chain corresponds to 1-86 (MECPKEIVLL…TARLRRFLHR (86 aa)). Zn(2+)-binding residues include histidine 30, cysteine 34, and cysteine 37. The helical transmembrane segment at 87–103 (HPLLTAASLFLALTLGS) threads the bilayer. Residues 104–203 (LASSWGERGA…RFNRALQSIE (100 aa)) are Extracellular-facing.

Belongs to the zinc-associated anti-sigma factor (ZAS) superfamily. Anti-sigma-W factor family. The cofactor is Zn(2+). Is processed by three successive proteolytic events. First, the extracellular region of RsiW is cleaved by PrsW (Site-1 cleavage) in response to cell envelope stresses. Next, it undergoes cleavage at an intramembrane site (Site-2 cleavage) mediated by RasP. This cleavage uncovers a cryptic proteolytic tag with conserved alanine residues in the transmembrane segment, that is recognized mainly by the ClpXP protease, which completely degrades the protein in the cytoplasm and leads to the induction of the sigma-W-controlled genes.

Its subcellular location is the membrane. Is the anti-sigma factor for SigW. The presence of RsiW leads to the inactivation of SigW, and its proteolytic destruction to sigma-W activation. The sequence is that of Anti-sigma-W factor RsiW (rsiW) from Geobacillus kaustophilus (strain HTA426).